Consider the following 161-residue polypeptide: Small ribosomal subunit protein bS6 (161 aa).

Residues 107 to 161 (KGDERERGFRGPKPAGRFESGRGGAGGARRGYDDREEFRARNEREDGRDTDGEAE) are disordered. The span at 136–161 (RGYDDREEFRARNEREDGRDTDGEAE) shows a compositional bias: basic and acidic residues.

The protein belongs to the bacterial ribosomal protein bS6 family.

Functionally, binds together with bS18 to 16S ribosomal RNA. This Gluconacetobacter diazotrophicus (strain ATCC 49037 / DSM 5601 / CCUG 37298 / CIP 103539 / LMG 7603 / PAl5) protein is Small ribosomal subunit protein bS6.